We begin with the raw amino-acid sequence, 108 residues long: Small ribosomal subunit protein eS25w (108 aa).

Residues methionine 1 to lysine 36 are disordered. The span at lysine 22–glycine 31 shows a compositional bias: basic residues.

This sequence belongs to the eukaryotic ribosomal protein eS25 family.

This chain is Small ribosomal subunit protein eS25w (RPS25E), found in Arabidopsis thaliana (Mouse-ear cress).